The sequence spans 38 residues: Large ribosomal subunit protein bL36 (38 aa).

It belongs to the bacterial ribosomal protein bL36 family.

The polypeptide is Large ribosomal subunit protein bL36 (Porphyromonas gingivalis (strain ATCC 33277 / DSM 20709 / CIP 103683 / JCM 12257 / NCTC 11834 / 2561)).